The sequence spans 276 residues: NH(3)-dependent NAD(+) synthetase (276 aa).

Glycine 43 to serine 50 is an ATP binding site. Residue aspartate 49 coordinates Mg(2+). Deamido-NAD(+) is bound at residue arginine 146. Residue threonine 166 coordinates ATP. Glutamate 171 contributes to the Mg(2+) binding site. Positions 179 and 186 each coordinate deamido-NAD(+). The ATP site is built by lysine 195 and threonine 217. Histidine 266–lysine 267 contacts deamido-NAD(+).

Belongs to the NAD synthetase family. As to quaternary structure, homodimer.

It carries out the reaction deamido-NAD(+) + NH4(+) + ATP = AMP + diphosphate + NAD(+) + H(+). It functions in the pathway cofactor biosynthesis; NAD(+) biosynthesis; NAD(+) from deamido-NAD(+) (ammonia route): step 1/1. In terms of biological role, catalyzes the ATP-dependent amidation of deamido-NAD to form NAD. Uses ammonia as a nitrogen source. The sequence is that of NH(3)-dependent NAD(+) synthetase from Aliivibrio salmonicida (strain LFI1238) (Vibrio salmonicida (strain LFI1238)).